The sequence spans 290 residues: Protease HtpX (290 aa).

The next 2 helical transmembrane spans lie at 12 to 32 (IAVMVLISLVFSLFGFQGLLA) and 42 to 62 (ALLVYSAVIGFSGSIISLLIS). His-147 contributes to the Zn(2+) binding site. The active site involves Glu-148. His-151 serves as a coordination point for Zn(2+). The next 2 helical transmembrane spans lie at 162-182 (LIQGVLNTFVVFLSRVIGHVV) and 197-217 (FWIVSIISQVILGILASMIVM). Glu-224 is a binding site for Zn(2+).

It belongs to the peptidase M48B family. Zn(2+) serves as cofactor.

It is found in the cell inner membrane. The protein is Protease HtpX of Pseudoalteromonas atlantica (strain T6c / ATCC BAA-1087).